A 433-amino-acid chain; its full sequence is Enolase (433 aa).

Glutamine 163 lines the (2R)-2-phosphoglycerate pocket. Glutamate 205 functions as the Proton donor in the catalytic mechanism. The Mg(2+) site is built by aspartate 242, glutamate 285, and aspartate 312. Positions 337, 366, 367, and 388 each coordinate (2R)-2-phosphoglycerate. Lysine 337 functions as the Proton acceptor in the catalytic mechanism.

Belongs to the enolase family. Mg(2+) serves as cofactor.

The protein localises to the cytoplasm. It is found in the secreted. Its subcellular location is the cell surface. It carries out the reaction (2R)-2-phosphoglycerate = phosphoenolpyruvate + H2O. It participates in carbohydrate degradation; glycolysis; pyruvate from D-glyceraldehyde 3-phosphate: step 4/5. Functionally, catalyzes the reversible conversion of 2-phosphoglycerate (2-PG) into phosphoenolpyruvate (PEP). It is essential for the degradation of carbohydrates via glycolysis. This is Enolase from Lawsonia intracellularis (strain PHE/MN1-00).